The following is a 204-amino-acid chain: Inactive ribonuclease-like protein 9 (204 aa).

The N-terminal stretch at 1–26 (MMRTLITTHPLLLLLLLQQLLQPVQF) is a signal peptide. Disulfide bonds link C97–C152, C115–C167, and C122–C129. N130 and N142 each carry an N-linked (GlcNAc...) asparagine glycan.

The protein belongs to the pancreatic ribonuclease family.

It localises to the secreted. In terms of biological role, does not exhibit any ribonuclease activity. The sequence is that of Inactive ribonuclease-like protein 9 (RNASE9) from Papio anubis (Olive baboon).